Consider the following 217-residue polypeptide: Adenylate kinase (217 aa).

Gly10–Thr15 is an ATP binding site. The tract at residues Ser30–Val59 is NMP. AMP-binding positions include Thr31, Arg36, Gln57–Val59, Gly85–Arg88, and Gln92. Residues Gly126–Asp164 are LID. Residue Arg127 participates in ATP binding. Zn(2+)-binding residues include Cys130, Cys133, Cys150, and Cys153. Residues Arg161 and Arg172 each coordinate AMP. Position 200 (Met200) interacts with ATP.

This sequence belongs to the adenylate kinase family. Monomer.

Its subcellular location is the cytoplasm. It catalyses the reaction AMP + ATP = 2 ADP. The protein operates within purine metabolism; AMP biosynthesis via salvage pathway; AMP from ADP: step 1/1. In terms of biological role, catalyzes the reversible transfer of the terminal phosphate group between ATP and AMP. Plays an important role in cellular energy homeostasis and in adenine nucleotide metabolism. This Paramagnetospirillum magneticum (strain ATCC 700264 / AMB-1) (Magnetospirillum magneticum) protein is Adenylate kinase.